We begin with the raw amino-acid sequence, 705 residues long: Translation initiation factor IF-2 (705 aa).

Positions 40–124 are disordered; that stretch reads DDQIKALDKK…QPAAPKEIPS (85 aa). Residues 41–58 are compositionally biased toward basic and acidic residues; it reads DQIKALDKKFKKEQKNDN. Positions 59-77 are enriched in low complexity; the sequence is KQSTQNNHQKSNNQNQNKG. Residues 94–108 are compositionally biased toward basic residues; it reads KGNKKNNRNNKKNNK. The tr-type G domain occupies 207 to 376; sequence ERPAVVTIMG…GLVAEVQELK (170 aa). The segment at 216 to 223 is G1; sequence GHVDHGKT. 216–223 serves as a coordination point for GTP; sequence GHVDHGKT. The tract at residues 241–245 is G2; that stretch reads GITQH. Residues 262–265 form a G3 region; the sequence is DTPG. GTP-binding positions include 262 to 266 and 316 to 319; these read DTPGH and NKID. The segment at 316–319 is G4; the sequence is NKID. Positions 352–354 are G5; the sequence is SAL.

This sequence belongs to the TRAFAC class translation factor GTPase superfamily. Classic translation factor GTPase family. IF-2 subfamily.

The protein resides in the cytoplasm. In terms of biological role, one of the essential components for the initiation of protein synthesis. Protects formylmethionyl-tRNA from spontaneous hydrolysis and promotes its binding to the 30S ribosomal subunits. Also involved in the hydrolysis of GTP during the formation of the 70S ribosomal complex. The chain is Translation initiation factor IF-2 from Staphylococcus aureus (strain MSSA476).